The primary structure comprises 132 residues: Large ribosomal subunit protein uL14 (132 aa).

This sequence belongs to the universal ribosomal protein uL14 family. In terms of assembly, part of the 50S ribosomal subunit. Forms a cluster with proteins L3 and L24e, part of which may contact the 16S rRNA in 2 intersubunit bridges.

Binds to 23S rRNA. Forms part of two intersubunit bridges in the 70S ribosome. The chain is Large ribosomal subunit protein uL14 from Methanoregula boonei (strain DSM 21154 / JCM 14090 / 6A8).